Consider the following 343-residue polypeptide: Retroviral-like aspartic protease 1 (343 aa).

The Cytoplasmic portion of the chain corresponds to 1–55 (MGSPGASLGIKKALQSEQATALPASAPAVSQPTAPAPSCLPKAGQVIPTLLREAP). A propeptide spanning residues 1–190 (MGSPGASLGI…HLPKEIVFAN (190 aa)) is cleaved from the precursor. A helical membrane pass occupies residues 56–76 (FSSVIAPTLLCGFLFLAWVAA). Over 77-343 (EVPEESSRMA…SEEGRQELSH (267 aa)) the chain is Extracellular. In terms of domain architecture, Peptidase A2 spans 207–288 (VRFLVDSGAQ…AEEAIIGTDV (82 aa)). The active site involves Asp212. N-linked (GlcNAc...) asparagine glycosylation occurs at Asn276. Residues 327-343 (LIEEDPSSEEGRQELSH) constitute a propeptide that is removed on maturation.

Homodimer. In terms of processing, undergoes autocleavage which is necessary for activation of the protein. Expressed primarily in the granular layer of the epidermis and inner root sheath of hair follicles. In psoriatic skin, expressed throughout the stratum corneum. In ulcerated skin, expressed in the stratum granulosum of intact epidermis but almost absent from ulcerated regions. Expressed in differentiated areas of squamous cell carcinomas but not in undifferentiated tumors.

The protein localises to the membrane. In terms of biological role, protease responsible for filaggrin processing, essential for the maintenance of a proper epidermis organization. This chain is Retroviral-like aspartic protease 1, found in Homo sapiens (Human).